The following is a 326-amino-acid chain: Vitamin B12 import system permease protein BtuC (326 aa).

9 consecutive transmembrane segments (helical) span residues 19-39 (LSVL…LWIL), 61-81 (LAVL…QALF), 88-108 (PGLL…VLLG), 112-132 (LPNW…TLIL), 146-166 (LLAG…AIYF), 184-204 (GGVD…LLWI), 240-260 (GWMV…GLVI), 274-294 (VLLP…DIVA), and 302-322 (ELPI…WLLL).

This sequence belongs to the binding-protein-dependent transport system permease family. FecCD subfamily. As to quaternary structure, the complex is composed of two ATP-binding proteins (BtuD), two transmembrane proteins (BtuC) and a solute-binding protein (BtuF).

The protein resides in the cell inner membrane. Its function is as follows. Part of the ABC transporter complex BtuCDF involved in vitamin B12 import. Involved in the translocation of the substrate across the membrane. The chain is Vitamin B12 import system permease protein BtuC from Escherichia coli O6:K15:H31 (strain 536 / UPEC).